We begin with the raw amino-acid sequence, 308 residues long: Isochorismatase domain-containing protein 1 (308 aa).

It belongs to the isochorismatase family.

The protein is Isochorismatase domain-containing protein 1 (isoc1) of Xenopus tropicalis (Western clawed frog).